The primary structure comprises 265 residues: Translation initiation factor 2 subunit alpha (265 aa).

An S1 motif domain is found at 12-82 (GELVIGTVKK…KMRVVEVSLK (71 aa)).

It belongs to the eIF-2-alpha family. In terms of assembly, heterotrimer composed of an alpha, a beta and a gamma chain.

Functionally, eIF-2 functions in the early steps of protein synthesis by forming a ternary complex with GTP and initiator tRNA. In Pyrobaculum aerophilum (strain ATCC 51768 / DSM 7523 / JCM 9630 / CIP 104966 / NBRC 100827 / IM2), this protein is Translation initiation factor 2 subunit alpha.